The primary structure comprises 100 residues: Integration host factor subunit beta (100 aa).

The disordered stretch occupies residues 81 to 100 (KPGKELRDRVNEDEHEEAHT). A compositionally biased stretch (basic and acidic residues) spans 82-100 (PGKELRDRVNEDEHEEAHT).

Belongs to the bacterial histone-like protein family. In terms of assembly, heterodimer of an alpha and a beta chain.

Functionally, this protein is one of the two subunits of integration host factor, a specific DNA-binding protein that functions in genetic recombination as well as in transcriptional and translational control. The sequence is that of Integration host factor subunit beta (ihfB) from Pseudomonas putida (Arthrobacter siderocapsulatus).